Consider the following 188-residue polypeptide: Peroxynitrite isomerase (188 aa).

Positions 35-41 (GTWRGEG) match the GXWXGXG motif. His-178 is a heme b binding site.

Belongs to the nitrobindin family. In terms of assembly, homodimer. Requires heme b as cofactor.

It catalyses the reaction peroxynitrite = nitrate. It functions in the pathway nitrogen metabolism. In terms of biological role, heme-binding protein able to scavenge peroxynitrite and to protect free L-tyrosine against peroxynitrite-mediated nitration, by acting as a peroxynitrite isomerase that converts peroxynitrite to nitrate. Therefore, this protein likely plays a role in peroxynitrite sensing and in the detoxification of reactive nitrogen and oxygen species (RNS and ROS, respectively). Is able to bind nitric oxide (NO) in vitro, but may act as a sensor of peroxynitrite levels in vivo. The chain is Peroxynitrite isomerase from Frankia casuarinae (strain DSM 45818 / CECT 9043 / HFP020203 / CcI3).